We begin with the raw amino-acid sequence, 190 residues long: Imidazole glycerol phosphate synthase subunit HisH (190 aa).

One can recognise a Glutamine amidotransferase type-1 domain in the interval 2-190; that stretch reads IVGVVDYTVG…IKRFLAVAKR (189 aa). Residue Cys-73 is the Nucleophile of the active site. Residues His-169 and Glu-171 contribute to the active site.

As to quaternary structure, heterodimer of HisH and HisF.

The protein localises to the cytoplasm. It catalyses the reaction 5-[(5-phospho-1-deoxy-D-ribulos-1-ylimino)methylamino]-1-(5-phospho-beta-D-ribosyl)imidazole-4-carboxamide + L-glutamine = D-erythro-1-(imidazol-4-yl)glycerol 3-phosphate + 5-amino-1-(5-phospho-beta-D-ribosyl)imidazole-4-carboxamide + L-glutamate + H(+). The catalysed reaction is L-glutamine + H2O = L-glutamate + NH4(+). Its pathway is amino-acid biosynthesis; L-histidine biosynthesis; L-histidine from 5-phospho-alpha-D-ribose 1-diphosphate: step 5/9. Functionally, IGPS catalyzes the conversion of PRFAR and glutamine to IGP, AICAR and glutamate. The HisH subunit catalyzes the hydrolysis of glutamine to glutamate and ammonia as part of the synthesis of IGP and AICAR. The resulting ammonia molecule is channeled to the active site of HisF. This chain is Imidazole glycerol phosphate synthase subunit HisH, found in Pyrobaculum aerophilum (strain ATCC 51768 / DSM 7523 / JCM 9630 / CIP 104966 / NBRC 100827 / IM2).